An 85-amino-acid polypeptide reads, in one-letter code: Turmerin (85 aa).

In terms of processing, the N-terminus is blocked.

Its function is as follows. Inhibition of trypsin. Has anticarcinogenic activity, prevents transformation of DMBA-treated JB6 cells. Has antipromoter activity, prevents promotion by tetradecanoyl phorbal acetate (TPA) in JB6 cells. Prevents tertiary butyl hydroperoxide-induced mutagenesis. Protects AT base pairs and shows antimutagenesis activity in TA102 and TA104 S.typhimurium mutagenesis tests. Inhibits paw edema formation induced by phospholipase A2 in Swiss Wistar mice. Prevents the release of arachidonate, the parent compound for the synthesis of prostaglandins and prostacyclins. Has antimalarial activity, kills P.falciparum. Has antivenom activity, nullifies the lethal effects of N.naja venom and inhibits phospholipase A2 present in N.naja venom. Has antifungal activity, inhibits cilia formation by A.niger. Is not toxic or allergenic. This chain is Turmerin, found in Curcuma longa (Turmeric).